A 54-amino-acid polypeptide reads, in one-letter code: Hydrophobic protein RCI2B (54 aa).

2 consecutive transmembrane segments (helical) span residues 2 to 22 (STAT…GVFL) and 32 to 52 (ICLI…LYII).

This sequence belongs to the UPF0057 (PMP3) family.

The protein resides in the membrane. This Arabidopsis thaliana (Mouse-ear cress) protein is Hydrophobic protein RCI2B (RCI2B).